The chain runs to 443 residues: Thymidine phosphorylase (443 aa).

It belongs to the thymidine/pyrimidine-nucleoside phosphorylase family. Homodimer.

The catalysed reaction is thymidine + phosphate = 2-deoxy-alpha-D-ribose 1-phosphate + thymine. It functions in the pathway pyrimidine metabolism; dTMP biosynthesis via salvage pathway; dTMP from thymine: step 1/2. Its function is as follows. The enzymes which catalyze the reversible phosphorolysis of pyrimidine nucleosides are involved in the degradation of these compounds and in their utilization as carbon and energy sources, or in the rescue of pyrimidine bases for nucleotide synthesis. This is Thymidine phosphorylase from Aliivibrio fischeri (strain ATCC 700601 / ES114) (Vibrio fischeri).